Consider the following 360-residue polypeptide: Phospho-N-acetylmuramoyl-pentapeptide-transferase (360 aa).

A run of 10 helical transmembrane segments spans residues 26–46, 70–90, 97–117, 134–154, 168–188, 199–219, 236–256, 263–283, 288–308, and 338–358; these read AILG…AMIR, GTPT…TLLW, FVWV…IDDY, FFWQ…TAQA, VAIQ…VGAS, GLAI…AYLS, VGDL…FLWF, VFMG…LAVV, IVLV…IMQV, and VIVR…ATLK.

It belongs to the glycosyltransferase 4 family. MraY subfamily. The cofactor is Mg(2+).

It is found in the cell inner membrane. It carries out the reaction UDP-N-acetyl-alpha-D-muramoyl-L-alanyl-gamma-D-glutamyl-meso-2,6-diaminopimeloyl-D-alanyl-D-alanine + di-trans,octa-cis-undecaprenyl phosphate = di-trans,octa-cis-undecaprenyl diphospho-N-acetyl-alpha-D-muramoyl-L-alanyl-D-glutamyl-meso-2,6-diaminopimeloyl-D-alanyl-D-alanine + UMP. It functions in the pathway cell wall biogenesis; peptidoglycan biosynthesis. Functionally, catalyzes the initial step of the lipid cycle reactions in the biosynthesis of the cell wall peptidoglycan: transfers peptidoglycan precursor phospho-MurNAc-pentapeptide from UDP-MurNAc-pentapeptide onto the lipid carrier undecaprenyl phosphate, yielding undecaprenyl-pyrophosphoryl-MurNAc-pentapeptide, known as lipid I. This Thioalkalivibrio sulfidiphilus (strain HL-EbGR7) protein is Phospho-N-acetylmuramoyl-pentapeptide-transferase.